A 1297-amino-acid chain; its full sequence is Probable bifunctional E2/E3 enzyme R795 (1297 aa).

The RING-type; atypical zinc finger occupies 74-128 (CAICRYQENEPCIEHKSSESNTKCPIAQSVSCSHSFHACCISRWLHTKKTCPLCN). In terms of domain architecture, U-box spans 678-750 (EPLQEFLCPI…RDWKENNTVI (73 aa)). Positions 899–1082 (EMTLEIHSSN…LDIMELETMI (184 aa)) constitute a VWFA domain. A UBC core domain is found at 1133–1279 (QKLIRVQREI…IIDYVNKFAL (147 aa)). The active-site Glycyl thioester intermediate is the Cys-1217.

In the C-terminal section; belongs to the ubiquitin-conjugating enzyme family.

It carries out the reaction S-ubiquitinyl-[E2 ubiquitin-conjugating enzyme]-L-cysteine + [acceptor protein]-L-lysine = [E2 ubiquitin-conjugating enzyme]-L-cysteine + N(6)-ubiquitinyl-[acceptor protein]-L-lysine.. It catalyses the reaction S-ubiquitinyl-[E1 ubiquitin-activating enzyme]-L-cysteine + [E2 ubiquitin-conjugating enzyme]-L-cysteine = [E1 ubiquitin-activating enzyme]-L-cysteine + S-ubiquitinyl-[E2 ubiquitin-conjugating enzyme]-L-cysteine.. It functions in the pathway protein modification; protein ubiquitination. Its function is as follows. Catalyzes the covalent attachment of ubiquitin to other proteins. Also acts as an E3 ubiquitin-protein ligase. The polypeptide is Probable bifunctional E2/E3 enzyme R795 (Acanthamoeba polyphaga (Amoeba)).